The following is a 242-amino-acid chain: 1-(5-phosphoribosyl)-5-[(5-phosphoribosylamino)methylideneamino] imidazole-4-carboxamide isomerase (242 aa).

Asp-10 acts as the Proton acceptor in catalysis. Asp-132 serves as the catalytic Proton donor.

The protein belongs to the HisA/HisF family.

It localises to the cytoplasm. The catalysed reaction is 1-(5-phospho-beta-D-ribosyl)-5-[(5-phospho-beta-D-ribosylamino)methylideneamino]imidazole-4-carboxamide = 5-[(5-phospho-1-deoxy-D-ribulos-1-ylimino)methylamino]-1-(5-phospho-beta-D-ribosyl)imidazole-4-carboxamide. It participates in amino-acid biosynthesis; L-histidine biosynthesis; L-histidine from 5-phospho-alpha-D-ribose 1-diphosphate: step 4/9. This is 1-(5-phosphoribosyl)-5-[(5-phosphoribosylamino)methylideneamino] imidazole-4-carboxamide isomerase from Methanothrix thermoacetophila (strain DSM 6194 / JCM 14653 / NBRC 101360 / PT) (Methanosaeta thermophila).